A 225-amino-acid chain; its full sequence is PKHD-type hydroxylase YbiX (225 aa).

The region spanning 78–177 is the Fe2OG dioxygenase domain; it reads TLSTPLFNRY…RVASFMWIQS (100 aa). Fe cation-binding residues include histidine 96, aspartate 98, and histidine 158. Residue arginine 168 coordinates 2-oxoglutarate.

It depends on Fe(2+) as a cofactor. Requires L-ascorbate as cofactor.

This Shigella sonnei (strain Ss046) protein is PKHD-type hydroxylase YbiX.